Here is a 394-residue protein sequence, read N- to C-terminus: Probable 6-phosphogluconolactonase ARB_02015 (394 aa).

Residues 1-21 (MKTVPFLSLLQAGILTSGIVA) form the signal peptide. Asparagine 51 carries N-linked (GlcNAc...) asparagine glycosylation.

It belongs to the cycloisomerase 2 family.

It localises to the secreted. It catalyses the reaction 6-phospho-D-glucono-1,5-lactone + H2O = 6-phospho-D-gluconate + H(+). The protein operates within carbohydrate degradation; pentose phosphate pathway; D-ribulose 5-phosphate from D-glucose 6-phosphate (oxidative stage): step 2/3. In terms of biological role, catalyzes the hydrolysis of 6-phosphogluconolactone to 6-phosphogluconate. The chain is Probable 6-phosphogluconolactonase ARB_02015 from Arthroderma benhamiae (strain ATCC MYA-4681 / CBS 112371) (Trichophyton mentagrophytes).